A 57-amino-acid polypeptide reads, in one-letter code: Large ribosomal subunit protein bL32A (57 aa).

The segment at 1–22 (MAVPARRTSKTKKRLRRTHEKL) is disordered. The segment covering 7–20 (RTSKTKKRLRRTHE) has biased composition (basic residues).

The protein belongs to the bacterial ribosomal protein bL32 family.

The polypeptide is Large ribosomal subunit protein bL32A (rpmF1) (Enterococcus faecalis (strain ATCC 700802 / V583)).